The chain runs to 411 residues: Ornithine aminotransferase (411 aa).

Lysine 257 carries the post-translational modification N6-(pyridoxal phosphate)lysine.

It belongs to the class-III pyridoxal-phosphate-dependent aminotransferase family. OAT subfamily. It depends on pyridoxal 5'-phosphate as a cofactor.

The protein resides in the cytoplasm. It catalyses the reaction a 2-oxocarboxylate + L-ornithine = L-glutamate 5-semialdehyde + an L-alpha-amino acid. It participates in amino-acid biosynthesis; L-proline biosynthesis; L-glutamate 5-semialdehyde from L-ornithine: step 1/1. Functionally, catalyzes the interconversion of ornithine to glutamate semialdehyde. This is Ornithine aminotransferase from Bordetella bronchiseptica (strain ATCC BAA-588 / NCTC 13252 / RB50) (Alcaligenes bronchisepticus).